The chain runs to 337 residues: LIX1-like protein (337 aa).

A disordered region spans residues 1–55 (METMRAQRLQPGVGVGGRGTLRALRPGVTGAPTSAATPPVGPPPAPPPPAPPLPP). The segment covering 26 to 38 (PGVTGAPTSAATP) has biased composition (low complexity). The span at 39 to 55 (PVGPPPAPPPPAPPLPP) shows a compositional bias: pro residues.

This sequence belongs to the LIX1 family.

In Mus musculus (Mouse), this protein is LIX1-like protein (Lix1l).